The following is a 336-amino-acid chain: tRNA-dihydrouridine(20/20a) synthase (336 aa).

FMN contacts are provided by residues 24 to 26 and Gln77; that span reads PMM. Cys107 (proton donor) is an active-site residue. FMN is bound by residues Lys146, His178, 218–220, and 240–241; these read NGG and GR.

Belongs to the Dus family. DusA subfamily. The cofactor is FMN.

It catalyses the reaction 5,6-dihydrouridine(20) in tRNA + NADP(+) = uridine(20) in tRNA + NADPH + H(+). The enzyme catalyses 5,6-dihydrouridine(20) in tRNA + NAD(+) = uridine(20) in tRNA + NADH + H(+). The catalysed reaction is 5,6-dihydrouridine(20a) in tRNA + NADP(+) = uridine(20a) in tRNA + NADPH + H(+). It carries out the reaction 5,6-dihydrouridine(20a) in tRNA + NAD(+) = uridine(20a) in tRNA + NADH + H(+). In terms of biological role, catalyzes the synthesis of 5,6-dihydrouridine (D), a modified base found in the D-loop of most tRNAs, via the reduction of the C5-C6 double bond in target uridines. Specifically modifies U20 and U20a in tRNAs. The polypeptide is tRNA-dihydrouridine(20/20a) synthase (Pseudomonas syringae pv. tomato (strain ATCC BAA-871 / DC3000)).